The chain runs to 502 residues: Protein YdgA (502 aa).

The signal sequence occupies residues 1 to 19 (MNKSLVAVGVIVALGVVWT).

The protein to E.coli YihF and H.influenzae HI_1236. As to quaternary structure, homodimer.

The protein resides in the cell inner membrane. In Escherichia coli (strain K12), this protein is Protein YdgA (ydgA).